Here is a 242-residue protein sequence, read N- to C-terminus: Ubiquinone biosynthesis O-methyltransferase (242 aa).

The S-adenosyl-L-methionine site is built by arginine 44, glycine 64, aspartate 85, and methionine 129.

Belongs to the methyltransferase superfamily. UbiG/COQ3 family.

The catalysed reaction is a 3-demethylubiquinol + S-adenosyl-L-methionine = a ubiquinol + S-adenosyl-L-homocysteine + H(+). It catalyses the reaction a 3-(all-trans-polyprenyl)benzene-1,2-diol + S-adenosyl-L-methionine = a 2-methoxy-6-(all-trans-polyprenyl)phenol + S-adenosyl-L-homocysteine + H(+). Its pathway is cofactor biosynthesis; ubiquinone biosynthesis. Functionally, O-methyltransferase that catalyzes the 2 O-methylation steps in the ubiquinone biosynthetic pathway. The protein is Ubiquinone biosynthesis O-methyltransferase of Salmonella agona (strain SL483).